Here is a 159-residue protein sequence, read N- to C-terminus: NADH-quinone oxidoreductase subunit I (159 aa).

2 4Fe-4S ferredoxin-type domains span residues 51 to 80 and 90 to 119; these read RRYEHGEERCIACKLCEAICPAQAIVIEAD and TRYDIDMTKCIYCGLCQEACPVDAIVEGPN. Positions 60, 63, 66, 70, 99, 102, 105, and 109 each coordinate [4Fe-4S] cluster.

This sequence belongs to the complex I 23 kDa subunit family. NDH-1 is composed of 14 different subunits. Subunits NuoA, H, J, K, L, M, N constitute the membrane sector of the complex. The cofactor is [4Fe-4S] cluster.

Its subcellular location is the cell inner membrane. The enzyme catalyses a quinone + NADH + 5 H(+)(in) = a quinol + NAD(+) + 4 H(+)(out). In terms of biological role, NDH-1 shuttles electrons from NADH, via FMN and iron-sulfur (Fe-S) centers, to quinones in the respiratory chain. The immediate electron acceptor for the enzyme in this species is believed to be ubiquinone. Couples the redox reaction to proton translocation (for every two electrons transferred, four hydrogen ions are translocated across the cytoplasmic membrane), and thus conserves the redox energy in a proton gradient. The sequence is that of NADH-quinone oxidoreductase subunit I from Rickettsia rickettsii (strain Sheila Smith).